Reading from the N-terminus, the 403-residue chain is Coenzyme A biosynthesis bifunctional protein CoaBC (403 aa).

A phosphopantothenoylcysteine decarboxylase region spans residues 1-197 (MLHHVKLIYA…LHPKSLEGKR (197 aa)). A phosphopantothenate--cysteine ligase region spans residues 198 to 403 (VLVTAGATRE…RLWDEIEKML (206 aa)). CTP contacts are provided by Asp287, Lys297, and Phe330.

The protein in the N-terminal section; belongs to the HFCD (homo-oligomeric flavin containing Cys decarboxylase) superfamily. In the C-terminal section; belongs to the PPC synthetase family. Mg(2+) serves as cofactor. It depends on FMN as a cofactor.

The catalysed reaction is N-[(R)-4-phosphopantothenoyl]-L-cysteine + H(+) = (R)-4'-phosphopantetheine + CO2. It carries out the reaction (R)-4'-phosphopantothenate + L-cysteine + CTP = N-[(R)-4-phosphopantothenoyl]-L-cysteine + CMP + diphosphate + H(+). It participates in cofactor biosynthesis; coenzyme A biosynthesis. Its function is as follows. Catalyzes two sequential steps in the biosynthesis of coenzyme A. In the first step cysteine is conjugated to 4'-phosphopantothenate to form 4-phosphopantothenoylcysteine. In the second step the latter compound is decarboxylated to form 4'-phosphopantotheine. The polypeptide is Coenzyme A biosynthesis bifunctional protein CoaBC (Thermococcus kodakarensis (strain ATCC BAA-918 / JCM 12380 / KOD1) (Pyrococcus kodakaraensis (strain KOD1))).